The primary structure comprises 336 residues: tRNA (guanine(10)-N2)-dimethyltransferase (336 aa).

Residues 50–147 (KILKKRLAYA…NDRFILTRRL (98 aa)) enclose the THUMP domain.

Belongs to the methyltransferase superfamily. Trm-G10 family. Monomer.

The protein localises to the cytoplasm. The catalysed reaction is guanosine(10) in tRNA + 2 S-adenosyl-L-methionine = N(2)-dimethylguanosine(10) in tRNA + 2 S-adenosyl-L-homocysteine + 2 H(+). In terms of biological role, catalyzes the adenosylmethionine-dependent methylation of the exocyclic amino group (N(2)) of guanosine at position 10 of various tRNAs. Acts via a two-step process that leads to the formation of either N(2)-monomethyl (m(2)G) or N(2)-dimethylguanosine (m(2)(2)G). The chain is tRNA (guanine(10)-N2)-dimethyltransferase (trmG10) from Methanothermobacter thermautotrophicus (strain ATCC 29096 / DSM 1053 / JCM 10044 / NBRC 100330 / Delta H) (Methanobacterium thermoautotrophicum).